We begin with the raw amino-acid sequence, 189 residues long: GTP cyclohydrolase 1 (189 aa).

Positions 78, 81, and 150 each coordinate Zn(2+).

Belongs to the GTP cyclohydrolase I family. Homomer.

It catalyses the reaction GTP + H2O = 7,8-dihydroneopterin 3'-triphosphate + formate + H(+). It functions in the pathway cofactor biosynthesis; 7,8-dihydroneopterin triphosphate biosynthesis; 7,8-dihydroneopterin triphosphate from GTP: step 1/1. This chain is GTP cyclohydrolase 1, found in Bacillus cytotoxicus (strain DSM 22905 / CIP 110041 / 391-98 / NVH 391-98).